Reading from the N-terminus, the 220-residue chain is Deoxyribose-phosphate aldolase (220 aa).

Aspartate 89 acts as the Proton donor/acceptor in catalysis. Lysine 151 serves as the catalytic Schiff-base intermediate with acetaldehyde. The Proton donor/acceptor role is filled by lysine 180.

It belongs to the DeoC/FbaB aldolase family. DeoC type 1 subfamily.

The protein resides in the cytoplasm. The enzyme catalyses 2-deoxy-D-ribose 5-phosphate = D-glyceraldehyde 3-phosphate + acetaldehyde. The protein operates within carbohydrate degradation; 2-deoxy-D-ribose 1-phosphate degradation; D-glyceraldehyde 3-phosphate and acetaldehyde from 2-deoxy-alpha-D-ribose 1-phosphate: step 2/2. Functionally, catalyzes a reversible aldol reaction between acetaldehyde and D-glyceraldehyde 3-phosphate to generate 2-deoxy-D-ribose 5-phosphate. This is Deoxyribose-phosphate aldolase from Streptococcus pneumoniae (strain CGSP14).